We begin with the raw amino-acid sequence, 677 residues long: AP-2 complex subunit beta (677 aa).

The segment at 597-677 is disordered; it reads RLRTRDSNPS…PMTPETHLMD (81 aa). Basic residues predominate over residues 616-627; the sequence is KKYNHFHQKSQT. A compositionally biased stretch (polar residues) spans 636 to 654; that stretch reads RNSWNPSPFSDESNSNTFS.

The protein belongs to the adaptor complexes large subunit family. In terms of assembly, adaptor protein complex 2 (AP-2) is a heterotetramer composed of two large adaptins (alpha-type subunit apl3 and beta-type subunit apl1), a medium chain (mu-type subunit apm4) and a small adaptin (sigma-type subunit aps2).

It localises to the cell membrane. Its subcellular location is the membrane. It is found in the coated pit. Its function is as follows. Adaptins are components of the adaptor complexes which link clathrin to receptors in coated vesicles. Clathrin-associated protein complexes are believed to interact with the cytoplasmic tails of membrane proteins, leading to their selection and concentration. Beta adaptin is a subunit of the plasma membrane adaptor. The protein is AP-2 complex subunit beta (apl1) of Schizosaccharomyces pombe (strain 972 / ATCC 24843) (Fission yeast).